Here is a 222-residue protein sequence, read N- to C-terminus: Cytidylate kinase (222 aa).

7 to 15 contributes to the ATP binding site; it reads GPAGAGKST.

The protein belongs to the cytidylate kinase family. Type 1 subfamily.

It is found in the cytoplasm. It catalyses the reaction CMP + ATP = CDP + ADP. The catalysed reaction is dCMP + ATP = dCDP + ADP. This is Cytidylate kinase from Carboxydothermus hydrogenoformans (strain ATCC BAA-161 / DSM 6008 / Z-2901).